The chain runs to 356 residues: 5-formaminoimidazole-4-carboxamide-1-(beta)-D-ribofuranosyl 5'-monophosphate synthetase 2 (356 aa).

Residues His-27 and Ser-94 each contribute to the 5-amino-1-(5-phospho-beta-D-ribosyl)imidazole-4-carboxamide site. The region spanning 101-333 (RENFTGMAVP…YSDLMQKRLS (233 aa)) is the ATP-grasp domain. Residues 145–196 (PHDI…TRYD) and Glu-226 each bind ATP. Residue Asn-255 participates in 5-amino-1-(5-phospho-beta-D-ribosyl)imidazole-4-carboxamide binding. Mg(2+) is bound by residues Glu-293 and Glu-306.

This sequence belongs to the phosphohexose mutase family. The cofactor is Mg(2+). Mn(2+) is required as a cofactor.

The catalysed reaction is 5-amino-1-(5-phospho-beta-D-ribosyl)imidazole-4-carboxamide + formate + ATP = 5-formamido-1-(5-phospho-D-ribosyl)imidazole-4-carboxamide + ADP + phosphate. Its pathway is purine metabolism; IMP biosynthesis via de novo pathway; 5-formamido-1-(5-phospho-D-ribosyl)imidazole-4-carboxamide from 5-amino-1-(5-phospho-D-ribosyl)imidazole-4-carboxamide (formate route): step 1/1. Functionally, catalyzes the ATP- and formate-dependent formylation of 5-aminoimidazole-4-carboxamide-1-beta-d-ribofuranosyl 5'-monophosphate (AICAR) to 5-formaminoimidazole-4-carboxamide-1-beta-d-ribofuranosyl 5'-monophosphate (FAICAR) in the absence of folates. This chain is 5-formaminoimidazole-4-carboxamide-1-(beta)-D-ribofuranosyl 5'-monophosphate synthetase 2, found in Methanosarcina mazei (strain ATCC BAA-159 / DSM 3647 / Goe1 / Go1 / JCM 11833 / OCM 88) (Methanosarcina frisia).